Here is a 509-residue protein sequence, read N- to C-terminus: Bifunctional purine biosynthesis protein PurH (509 aa).

Residues 1-144 form the MGS-like domain; the sequence is MKRALISVSD…KNYAAVTVVV (144 aa).

Belongs to the PurH family.

It carries out the reaction (6R)-10-formyltetrahydrofolate + 5-amino-1-(5-phospho-beta-D-ribosyl)imidazole-4-carboxamide = 5-formamido-1-(5-phospho-D-ribosyl)imidazole-4-carboxamide + (6S)-5,6,7,8-tetrahydrofolate. It catalyses the reaction IMP + H2O = 5-formamido-1-(5-phospho-D-ribosyl)imidazole-4-carboxamide. It functions in the pathway purine metabolism; IMP biosynthesis via de novo pathway; 5-formamido-1-(5-phospho-D-ribosyl)imidazole-4-carboxamide from 5-amino-1-(5-phospho-D-ribosyl)imidazole-4-carboxamide (10-formyl THF route): step 1/1. Its pathway is purine metabolism; IMP biosynthesis via de novo pathway; IMP from 5-formamido-1-(5-phospho-D-ribosyl)imidazole-4-carboxamide: step 1/1. This Listeria monocytogenes serotype 4a (strain HCC23) protein is Bifunctional purine biosynthesis protein PurH.